Reading from the N-terminus, the 105-residue chain is UPF0145 protein CCNA_02462 (105 aa).

The protein belongs to the UPF0145 family.

In Caulobacter vibrioides (strain NA1000 / CB15N) (Caulobacter crescentus), this protein is UPF0145 protein CCNA_02462.